The following is a 197-amino-acid chain: Imidazoleglycerol-phosphate dehydratase (197 aa).

This sequence belongs to the imidazoleglycerol-phosphate dehydratase family.

Its subcellular location is the cytoplasm. It catalyses the reaction D-erythro-1-(imidazol-4-yl)glycerol 3-phosphate = 3-(imidazol-4-yl)-2-oxopropyl phosphate + H2O. It functions in the pathway amino-acid biosynthesis; L-histidine biosynthesis; L-histidine from 5-phospho-alpha-D-ribose 1-diphosphate: step 6/9. This chain is Imidazoleglycerol-phosphate dehydratase, found in Saccharophagus degradans (strain 2-40 / ATCC 43961 / DSM 17024).